Reading from the N-terminus, the 51-residue chain is Ovomucoid (51 aa).

The region spanning 1-49 (VDCSEYPQPACTTERRPVCGSNNKTYSNKCNFCNAVVKSNGTLTVSHFG) is the Kazal-like domain. Intrachain disulfides connect Cys3-Cys33, Cys11-Cys30, and Cys19-Cys51. The N-linked (GlcNAc...) asparagine glycan is linked to Asn40.

Its subcellular location is the secreted. This chain is Ovomucoid, found in Polyplectron napoleonis (Palawan peacock-pheasant).